Reading from the N-terminus, the 402-residue chain is Metacaspase-1 (402 aa).

The disordered stretch occupies residues 1-79 (MAYPGQGGHH…FAPPSGPIGP (79 aa)). Over residues 23-45 (PAPHGYAQPGYGYAPPSGPPQGY) the composition is skewed to low complexity. Active-site residues include H193 and C249.

Belongs to the peptidase C14B family.

Involved in cell death (apoptosis). The sequence is that of Metacaspase-1 (MCA1) from Mycosarcoma maydis (Corn smut fungus).